The sequence spans 527 residues: Tetanolysin (527 aa).

An N-terminal signal peptide occupies residues 1 to 32 (MNKNVLKFVSRSLLIFSMTGLISNYNSSNVLA). Beta stranded transmembrane passes span 215 to 228 (QSQLSAAVGCNFKA), 235 to 244 (IDFDSIFKGE), 313 to 322 (SSHVKAAFKA), and 330 to 342 (SSNAEYKDILNQS). The Conserved undecapeptide motif lies at 484–494 (ECTGLAWEWWR). The short motif at 516-517 (TL) is the Cholesterol binding element.

The protein belongs to the cholesterol-dependent cytolysin family. Homooligomeric pore complex containing 35-50 subunits; when inserted in the host membrane. Post-translationally, purified 48 and 53 kDa proteins with 4 different pIs (6.1, 5.6, 5.3 and 6.6) in decreasing order of activity.

The protein resides in the secreted. It is found in the host cell membrane. Cytolysis of host cells is inhibited by cholesterol. Its function is as follows. A cholesterol-dependent toxin that causes cytolysis by forming pores in cholesterol-containing host membranes. After binding to target membranes, the protein undergoes a major conformation change, leading to its insertion in the host membrane and formation of an oligomeric pore complex. Cholesterol is required for binding to host membranes, membrane insertion and pore formation; cholesterol binding is mediated by a Thr-Leu pair in the C-terminus. In Clostridium tetani (strain Massachusetts / E88), this protein is Tetanolysin.